Consider the following 287-residue polypeptide: CTD small phosphatase-like protein 3 (287 aa).

Residues 60-219 form the FCP1 homology domain; it reads RSTPEYTLVL…LKLCSFLEAI (160 aa).

It belongs to the CTDSPL2 family.

In terms of biological role, probable phosphatase. In Caenorhabditis elegans, this protein is CTD small phosphatase-like protein 3 (scpl-3).